Here is an 833-residue protein sequence, read N- to C-terminus: MSQTIDLTLDGLSCGHCVKRVKESLEQRPDVELADVTVTEAHVTGTASADALIETIKQAGYGATLSHPKAKPLTESSIPSEALAAVPHELPVATADEESQQLLLSGMSCASCVTRVQHALQSVPGVTQARVNLAERTALVMGSASAADLVQAVEKAGYGAEAIEDDIKRRERQQETAIATMKRFRWQAIVALAVGIPVMVWGMIGDNMMVTDDNRSLWLAIGLITLAVMVFAGGHFYRNAWKSLLNGTATMDTLVALGTGVAWLYSMSVNLWPQWFPMEARHLYYEASAMIIGLINLGHMLEARARQRSSKALEKLLDLTPPTARVVTEDGEKSVPLADVQPGMLLRLTTGDRVPVDGEITQGEAWLDEAMLTGEPIPQQKGEGDSVHAGTVVQDGSVLFRASAVGSHTTLSRIIRMVRQAQSSKPEIGQLADKISAVFVPVVVAIALFSAAIWYFFGPAPQIVYTLVIATTVLIIACPCALGLATPMSIISGVGRAAEFGVLVRDADALQRASTLDTLVFDKTGTLTEGKPQVVAIKTFNGVEEAQALRLAAALEQGSSHPLAHAILEKAGDDKLPQVNGFRTLRGLGVSGEAEGHQLLLGNQALLNEQHVATDDMTAEITAQASQGSTPVLLAIDGKAAALLAVRDPLRSDSIAALERLHNAGYRLVMLTGDNPTTANAIAKEAGIDEVIAGVLPDGKADAIKRLQSQGRQVAMVGDGINDAPALAQADVGIAMGGGSDVAIETAAITLMRHSLMGVADALAISRATLRNMKQNLLGAFIYNSIGIPVAAGILWPFTGTLLNPVVAGAAMALSSITVVSNANRLLRFKPKA.

HMA domains are found at residues 3-64 (QTID…YGAT) and 98-161 (ESQQ…YGAE). Cysteine 14, cysteine 17, cysteine 109, and cysteine 112 together coordinate Cu(+). 6 consecutive transmembrane segments (helical) span residues 186–206 (WQAIVALAVGIPVMVWGMIGD), 217–237 (LWLAIGLITLAVMVFAGGHFY), 253–273 (TLVALGTGVAWLYSMSVNLWP), 283–303 (LYYEASAMIIGLINLGHMLEA), 437–457 (AVFVPVVVAIALFSAAIWYFF), and 463–483 (IVYTLVIATTVLIIACPCALG). The active-site 4-aspartylphosphate intermediate is aspartate 522. Mg(2+) is bound by residues aspartate 719 and aspartate 723. A run of 2 helical transmembrane segments spans residues 778 to 798 (LGAFIYNSIGIPVAAGILWPF) and 800 to 820 (GTLLNPVVAGAAMALSSITVV).

It belongs to the cation transport ATPase (P-type) (TC 3.A.3) family. Type IB subfamily.

The protein resides in the cell inner membrane. Its subcellular location is the cytoplasm. The catalysed reaction is Cu(+)(in) + ATP + H2O = Cu(+)(out) + ADP + phosphate + H(+). Involved in Cu(+) export. Essential for copper tolerance under both aerobic and anaerobic conditions. Functionally, probably also encodes a cytoplasmic copper chaperone CopA(Z) that is produced by programmed ribosomal frameshifting. In Salmonella typhimurium (strain LT2 / SGSC1412 / ATCC 700720), this protein is Copper-exporting P-type ATPase (copA).